The chain runs to 302 residues: tRNA demethylase abh1 (302 aa).

Substrate-binding positions include Trp-142 and 149–151; that span reads YDW. The Fe2OG dioxygenase domain occupies 187-299; the sequence is KAEAAIVNFY…RVNFNVRQVR (113 aa). Residue 194–196 participates in 2-oxoglutarate binding; it reads NFY. Fe cation-binding residues include His-205 and Asp-207. Arg-235 is a binding site for substrate. His-261 serves as a coordination point for Fe cation. Position 290–296 (290–296) interacts with 2-oxoglutarate; it reads RVNFNVR.

Belongs to the alkB family. Requires Fe(2+) as cofactor.

It is found in the cytoplasm. It localises to the nucleus. The catalysed reaction is an N(1)-methyladenosine in tRNA + 2-oxoglutarate + O2 = an adenosine in tRNA + formaldehyde + succinate + CO2. It catalyses the reaction N(1)-methyladenosine(58) in tRNA + 2-oxoglutarate + O2 = adenosine(58) in tRNA + formaldehyde + succinate + CO2. Its function is as follows. Dioxygenase that acts as on nucleic acids, such as DNA and tRNA. Requires molecular oxygen, alpha-ketoglutarate and iron. Mainly acts as a tRNA demethylase by removing N(1)-methyladenine from various tRNAs, with a preference for N(1)-methyladenine at position 58 (m1A58) present on a stem loop structure of tRNAs. Acts as a regulator of translation initiation and elongation. Does not appear to possess DNA repair activity; no activity towards methylated DNA or etheno adducts. Exhibits a weak and unstable DNA lyase activity; this activity is probably not biologically significant and proceeds by a mechanism different from the classical dioxygenase reaction as it does not require 2-oxoglutarate or iron. The sequence is that of tRNA demethylase abh1 (abh1) from Schizosaccharomyces pombe (strain 972 / ATCC 24843) (Fission yeast).